Here is a 270-residue protein sequence, read N- to C-terminus: Acyl-[acyl-carrier-protein]--UDP-N-acetylglucosamine O-acyltransferase (270 aa).

The protein belongs to the transferase hexapeptide repeat family. LpxA subfamily. As to quaternary structure, homotrimer.

The protein resides in the cytoplasm. It carries out the reaction a (3R)-hydroxyacyl-[ACP] + UDP-N-acetyl-alpha-D-glucosamine = a UDP-3-O-[(3R)-3-hydroxyacyl]-N-acetyl-alpha-D-glucosamine + holo-[ACP]. The protein operates within glycolipid biosynthesis; lipid IV(A) biosynthesis; lipid IV(A) from (3R)-3-hydroxytetradecanoyl-[acyl-carrier-protein] and UDP-N-acetyl-alpha-D-glucosamine: step 1/6. Its function is as follows. Involved in the biosynthesis of lipid A, a phosphorylated glycolipid that anchors the lipopolysaccharide to the outer membrane of the cell. The sequence is that of Acyl-[acyl-carrier-protein]--UDP-N-acetylglucosamine O-acyltransferase from Sinorhizobium medicae (strain WSM419) (Ensifer medicae).